The chain runs to 143 residues: uncharacterized protein (143 aa).

In terms of domain architecture, Rhodanese spans 50 to 143; sequence NKEDAVVVDL…GENLPLVRGK (94 aa). N6-acetyllysine is present on lysine 91.

This is an uncharacterized protein from Escherichia coli O6:H1 (strain CFT073 / ATCC 700928 / UPEC).